Consider the following 328-residue polypeptide: DNA-directed RNA polymerase subunit alpha (328 aa).

The interval 1-235 (MQGSVTEFLK…EQLDAFVDLR (235 aa)) is alpha N-terminal domain (alpha-NTD). An alpha C-terminal domain (alpha-CTD) region spans residues 249-328 (FDPILLRPVD…ENWPPASLAE (80 aa)).

The protein belongs to the RNA polymerase alpha chain family. In terms of assembly, homodimer. The RNAP catalytic core consists of 2 alpha, 1 beta, 1 beta' and 1 omega subunit. When a sigma factor is associated with the core the holoenzyme is formed, which can initiate transcription.

The enzyme catalyses RNA(n) + a ribonucleoside 5'-triphosphate = RNA(n+1) + diphosphate. Functionally, DNA-dependent RNA polymerase catalyzes the transcription of DNA into RNA using the four ribonucleoside triphosphates as substrates. The protein is DNA-directed RNA polymerase subunit alpha of Pseudoalteromonas translucida (strain TAC 125).